A 306-amino-acid chain; its full sequence is uncharacterized protein (306 aa).

The protein to M.tuberculosis Rv1486c, M.bovis Mb1522c and M.leprae ML1804.

This is an uncharacterized protein from Mycobacterium avium.